The chain runs to 418 residues: Tektin-1 (418 aa).

4 coiled-coil regions span residues 20–107, 134–177, 266–308, and 332–383; these read NKSQ…SYKE, QELQ…DLKD, NGLK…QQEG, and VAQY…ENTI.

The protein belongs to the tektin family. Microtubule inner protein component of sperm flagellar doublet microtubules. In terms of processing, ubiquitinated, leading to its degradation. Deubiquitinated by USP16, promoting its stability. As to expression, predominantly expressed in testis.

It localises to the cytoplasm. The protein resides in the cytoskeleton. It is found in the cilium axoneme. Its subcellular location is the flagellum axoneme. In terms of biological role, microtubule inner protein (MIP) part of the dynein-decorated doublet microtubules (DMTs) in cilia and flagellar axoneme. Forms filamentous polymers in the walls of ciliary and flagellar microtubules. The polypeptide is Tektin-1 (Tekt1) (Rattus norvegicus (Rat)).